A 1963-amino-acid chain; its full sequence is Immunoglobulin A1 protease (1963 aa).

The signal sequence occupies residues 1–36 (MEKYFGEKQERFSFRKLSVGLVSATISSLFFMSVLA). The propeptide occupies 37 to 99 (SSSVDAQETA…QNQLAELPNT (63 aa)). The LPXTG sorting signal signature appears at 96–100 (LPNTG). Thr-99 is modified (pentaglycyl murein peptidoglycan amidated threonine). Helical transmembrane passes span 106-125 (QALV…FAVS) and 132-154 (KTVL…VHAL). Residues 155-1963 (ENHLLLNYNT…FRSSIFENKK (1809 aa)) are Extracellular-facing. Positions 253–305 (KPFSTELINPRKEEKQSSDSQEQLAEHKNLETKKEEKISPKEKTGVNTLNPQD) are disordered. Positions 276–296 (LAEHKNLETKKEEKISPKEKT) are enriched in basic and acidic residues. The region spanning 314 to 393 (KPELLYREET…PRIVEKGTKK (80 aa)) is the G5 domain. The tract at residues 402–681 (ETGVEHKDVQ…GQTEPEKKLE (280 aa)) is disordered. Repeat copies occupy residues 419-435 (AIQP…KGEP), 436-452 (EVQP…KGET), and 453-469 (EVQP…KGEP). The tract at residues 419–469 (AIQPELPEAVVSDKGEPEVQPTLPEAVVTDKGETEVQPESPDTVVSDKGEP) is 3 X 17 AA approximate tandem repeats. Residues 485–511 (VKPETPVEKTKEQGPEKTEEVPVKPTE) are compositionally biased toward basic and acidic residues. 2 stretches are compositionally biased toward polar residues: residues 516 to 529 (NPNE…SIQE) and 538 to 572 (EEST…SVGE). The span at 574–591 (NKPEHNDSKNENSEKTVE) shows a compositional bias: basic and acidic residues. 2 stretches are compositionally biased toward polar residues: residues 618-639 (EETQ…SNKP) and 648-674 (ESNQ…NGQT). Residue His-1604 coordinates Zn(2+). Glu-1605 is an active-site residue. Residues His-1608 and Glu-1628 each contribute to the Zn(2+) site.

The protein belongs to the peptidase M26 family. Requires Zn(2+) as cofactor. In terms of processing, the Gram-positive cell-wall anchor motif LPXTG is located in the N-terminal part, in contrast to such motifs in other known streptococcal and staphylococcal proteins. The protease could be cleaved by the sortase and anchored in the membrane via the two potential N-terminal transmembrane domains, whereas the propeptide located prior to the LPXTG motif would remain attached to the cell wall peptidoglycan by an amide bond.

The protein localises to the secreted. Its subcellular location is the cell wall. It localises to the membrane. It catalyses the reaction Cleavage of Pro-|-Thr bond in the hinge region of the heavy chain of human IgA.. Its function is as follows. Zinc metalloproteinase which cleaves human immunoglobulin A1 (IgA1) in the hinge region. The chain is Immunoglobulin A1 protease (iga) from Streptococcus pneumoniae (strain ATCC BAA-255 / R6).